Here is a 315-residue protein sequence, read N- to C-terminus: Methionyl-tRNA formyltransferase (315 aa).

Residue S113 to P116 participates in (6S)-5,6,7,8-tetrahydrofolate binding.

Belongs to the Fmt family.

The enzyme catalyses L-methionyl-tRNA(fMet) + (6R)-10-formyltetrahydrofolate = N-formyl-L-methionyl-tRNA(fMet) + (6S)-5,6,7,8-tetrahydrofolate + H(+). Functionally, attaches a formyl group to the free amino group of methionyl-tRNA(fMet). The formyl group appears to play a dual role in the initiator identity of N-formylmethionyl-tRNA by promoting its recognition by IF2 and preventing the misappropriation of this tRNA by the elongation apparatus. The chain is Methionyl-tRNA formyltransferase from Yersinia pseudotuberculosis serotype O:1b (strain IP 31758).